The chain runs to 124 residues: Succinate dehydrogenase cytochrome b556 subunit (124 aa).

Residues 1–29 (MTKIKQEIYNKRPTSPHLTIYKPQISSTL) lie on the Cytoplasmic side of the membrane. Residues 30-55 (SILHRMTGVALFFVVSILVWWLILSK) form a helical membrane-spanning segment. Over 56 to 67 (YDNNYLQLASCC) the chain is Periplasmic. The chain crosses the membrane as a helical span at residues 68–88 (IIKICLVAFSYSWCYHLCNGI). Position 83 (His-83) interacts with heme. The Cytoplasmic segment spans residues 89–103 (RHLFWDIGYGFSIKA). A helical membrane pass occupies residues 104-124 (VNITGWCVVVCSILLTMLLWV).

The protein belongs to the cytochrome b560 family. In terms of assembly, part of an enzyme complex containing four subunits: a flavoprotein, an iron-sulfur protein, plus two membrane-anchoring proteins, SdhC and SdhD. The complex can form homotrimers. The cofactor is heme.

It localises to the cell inner membrane. It participates in carbohydrate metabolism; tricarboxylic acid cycle. In terms of biological role, membrane-anchoring subunit of succinate dehydrogenase (SDH). The chain is Succinate dehydrogenase cytochrome b556 subunit (sdhC) from Rickettsia prowazekii (strain Madrid E).